Reading from the N-terminus, the 233-residue chain is uncharacterized protein (233 aa).

A run of 3 helical transmembrane segments spans residues 78-98 (FCLI…PVMY), 113-133 (FITC…LFKL), and 188-208 (FLLI…YGTI).

The protein resides in the membrane. This is an uncharacterized protein from Saccharomyces cerevisiae (strain ATCC 204508 / S288c) (Baker's yeast).